We begin with the raw amino-acid sequence, 1185 residues long: DNA-directed RNA polymerase subunit beta' (1185 aa).

Zn(2+)-binding residues include Cys67, Cys69, Cys82, and Cys85. The Mg(2+) site is built by Asp457, Asp459, and Asp461. Cys802, Cys876, Cys883, and Cys886 together coordinate Zn(2+).

The protein belongs to the RNA polymerase beta' chain family. As to quaternary structure, the RNAP catalytic core consists of 2 alpha, 1 beta, 1 beta' and 1 omega subunit. When a sigma factor is associated with the core the holoenzyme is formed, which can initiate transcription. It depends on Mg(2+) as a cofactor. Requires Zn(2+) as cofactor.

The catalysed reaction is RNA(n) + a ribonucleoside 5'-triphosphate = RNA(n+1) + diphosphate. In terms of biological role, DNA-dependent RNA polymerase catalyzes the transcription of DNA into RNA using the four ribonucleoside triphosphates as substrates. In Clostridium novyi (strain NT), this protein is DNA-directed RNA polymerase subunit beta'.